The following is a 175-amino-acid chain: Protein LAZY 3 (175 aa).

The interval 9-39 (RKLSGKKRVPTSDSSQEPSSPPLSKEVQGLP) is disordered. Residues 44 to 50 (TFLAIGT) carry the IGT motif motif.

Belongs to the LAZY family. As to expression, specifically expressed in roots. Expressed in root tips of young seedlings.

In terms of biological role, involved in the regulation of root gravitropism. Functions redundantly with LAZY2 and LAZY4 in the control of root gravitropism. Functions redundantly with LAZY1, LAZY2 and LAZY4 to control plant architecture by coupling gravity sensing to the formation of auxin gradients. The chain is Protein LAZY 3 from Arabidopsis thaliana (Mouse-ear cress).